Reading from the N-terminus, the 471-residue chain is Putative multidrug resistance protein MdtD (471 aa).

Residues 1 to 11 (MTELPDSTRWQ) are Periplasmic-facing. The helical transmembrane segment at 12 to 32 (LWIVAFGFFMQSLDTTIVNTA) threads the bilayer. At 33 to 48 (LPSMAQSLGESPLHMH) the chain is on the cytoplasmic side. Residues 49-69 (MVIVSYVLTVAVMLPASGWLA) form a helical membrane-spanning segment. Topologically, residues 70-76 (DKVGVRN) are periplasmic. The helical transmembrane segment at 77-97 (IFFTAIVLFTLGSLFCALSGT) threads the bilayer. The Cytoplasmic segment spans residues 98–101 (LNEL). Residues 102-124 (LLARALQGVGGAMMVPVGRLTVM) form a helical membrane-spanning segment. The Periplasmic segment spans residues 125-137 (KIVPREQYMAAMT). The chain crosses the membrane as a helical span at residues 138 to 158 (FVTLPGQVGPLLGPALGGLLV). Residues 159–164 (EYASWH) lie on the Cytoplasmic side of the membrane. The helical transmembrane segment at 165-185 (WIFLINIPVGIIGAIATLLLM) threads the bilayer. Residues 186 to 196 (PNYTMQTRRFD) lie on the Periplasmic side of the membrane. A helical membrane pass occupies residues 197–217 (LSGFLLLAVGMAVLTLALDGS). At 218–224 (KGTGLSP) the chain is on the cytoplasmic side. A helical membrane pass occupies residues 225 to 245 (LAIAGLVAVGVVALVLYLLHA). The Periplasmic segment spans residues 246–262 (RNNNRALFSLKLFRTRT). Residues 263–283 (FSLGLAGSFAGRIGSGMLPFM) form a helical membrane-spanning segment. Residues 284-285 (TP) lie on the Cytoplasmic side of the membrane. The chain crosses the membrane as a helical span at residues 286 to 306 (VFLQIGLGFSPFHAGLMMIPM). Residues 307 to 341 (VLGSMGMKRIVVQVVNRFGYRRVLVATTLGLSLIT) are Periplasmic-facing. The helical transmembrane segment at 342–362 (LLFMTTALLGWYYVLPFVLFL) threads the bilayer. The Cytoplasmic portion of the chain corresponds to 363–395 (QGMVNSTRFSSMNTLTLKDLPDNLASSGNSLLS). Residues 396 to 416 (MIMQLSMSIGVTIAGLLLGLF) form a helical membrane-spanning segment. Topologically, residues 417-430 (GSQHVSVDSGTTQT) are periplasmic. Residues 431 to 451 (VFMYTWLSMAFIIALPAFIFA) form a helical membrane-spanning segment. At 452 to 471 (RVPNDTHQNVAISRRKRSAQ) the chain is on the cytoplasmic side.

This sequence belongs to the major facilitator superfamily. TCR/Tet family.

It localises to the cell inner membrane. The protein is Putative multidrug resistance protein MdtD of Shigella sonnei (strain Ss046).